The following is a 770-amino-acid chain: Disabled homolog 2 (770 aa).

Positions 1–16 (MSNEVETSATNGQPDQ) are enriched in polar residues. Positions 1–38 (MSNEVETSATNGQPDQQAAPKAPSKKEKKKGPEKTDEY) are disordered. S2 bears the N-acetylserine mark. At S2 the chain carries Phosphoserine. Residues 45 to 196 (GDGVKYKAKL…KAVENGSEAL (152 aa)) form the PID domain. Y170 bears the Phosphotyrosine mark. S193 bears the Phosphoserine mark. A required for localization to clathrin-coated pits region spans residues 230–447 (ESKDILLVDL…KPGRGRRTAK (218 aa)). 2 disordered regions span residues 284 to 482 (LNFF…LQPN) and 604 to 629 (VSTQ…AGPP). 2 short sequence motifs (DPF) span residues 293–295 (DPF) and 298–300 (DPF). The span at 302-313 (QPDQSTPSSFDS) shows a compositional bias: polar residues. S326 and S328 each carry phosphoserine; in mitosis. Over residues 366–396 (FSSSQTQPAVRTQNGVSEREQNGFSVKSSPN) the composition is skewed to polar residues. Phosphoserine is present on S401. Composition is skewed to polar residues over residues 407 to 425 (SIQN…SSPH), 466 to 480 (PSGQ…TALQ), and 604 to 616 (VSTQ…SSLL). The segment at 604–732 (VSTQPPSMHS…SLPVTKSTDN (129 aa)) is sufficient for interaction with GRB2. The tract at residues 619–627 (PPQPPPRAG) is required for interaction with CSK. Positions 649-770 (KDVKEMFKDF…YRDPFGNPFA (122 aa)) are required for interaction with MYO6. Positions 663–671 (PPAVPARKG) are required for interaction with GRB2 and CSK. 3 positions are modified to phosphoserine: S675, S723, and S729. The sufficient for interaction with SH3KBP1 SH3 domain stretch occupies residues 709–725 (NKINEPPKPAPRQVSLP). The tract at residues 742–770 (SFGSSQASVASSQPVSSEMYRDPFGNPFA) is disordered. Residues 745 to 758 (SSQASVASSQPVSS) show a composition bias toward low complexity.

Interacts (via NPXY motif) with DAB2 (via PID domain). Can interact (via PID domain) with LDLR, APP, APLP1 and APLP2, and weakly with INPP5D (via NPXY motifs); the interaction is impaired by tyrosine phosphorylation of the respective NPXY motifs. Can weakly interact (via PID domain) with LRP1 (via NPXY motif); the interaction is enhanced by tyrosine phosphorylation of the NPXY motif. Interacts with LRP2 (via NPXY motif); the interaction is not affected by tyrosine phosphorylation of the NPXY motif. Interacts with clathrin; in vitro can assemble clathrin triskelia into polyhedral coats. Interacts with AP2A2, ITGB1, ITGB3, ITGB5, PIAS2, DAB2IP, NOSTRIN, FCHO1, DVL3, EPS15, ITSN1 and EPS15L1. Interacts with SH3KBP1 (via SH3 domains). Interacts with GRB2; competes with SOS1 for binding to GRB2 and the interaction is enhanced by EGF and NT-3 stimulation. Interacts with MAP3K7; the interaction is induced by TGF-beta stimulation and may mediate TGF-beta stimulated JNK activation. Interacts with AXIN1 and PPP1CA; the interactions are mutually exclusive. Interacts with the globular tail of MYO6. Interacts (via DPF motifs) with FCHO2; the interaction is direct and required for DAB2-mediated LDLR endocytosis. Interacts with LRP6; the interaction involves LRP6 phosphorylation by CK2 and sequesters LRP6 towards clathrin-mediated endocytosis. Associates with the TGF-beta receptor complex. Interacts with SMAD2 and SMAD3; the interactions are enhanced upon TGF-beta stimulation. Interacts with GRB2; the interaction is enhanced by EGF and NT-3 stimulation. Interacts with SRC; the interaction is enhanced by EGF stimulation. In terms of processing, phosphorylated. Phosphorylation during mitosis is leading to membrane displacement. Expressed in deep invaginations, inclusion cysts and the surface epithelial cells of the ovary. Also expressed in breast epithelial cells, spleen, thymus, prostate, testis, macrophages, fibroblasts, lung epithelial cells, placenta, brain stem, heart and small intestine. Expressed in kidney proximal tubular epithelial cells (at protein level).

Its subcellular location is the cytoplasm. It localises to the cytoplasmic vesicle. The protein resides in the clathrin-coated vesicle membrane. It is found in the membrane. The protein localises to the clathrin-coated pit. Its function is as follows. Adapter protein that functions as a clathrin-associated sorting protein (CLASP) required for clathrin-mediated endocytosis of selected cargo proteins. Can bind and assemble clathrin, and binds simultaneously to phosphatidylinositol 4,5-bisphosphate (PtdIns(4,5)P2) and cargos containing non-phosphorylated NPXY internalization motifs, such as the LDL receptor, to recruit them to clathrin-coated pits. Can function in clathrin-mediated endocytosis independently of the AP-2 complex. Involved in endocytosis of integrin beta-1; this function seems to redundant with the AP-2 complex and seems to require DAB2 binding to endocytosis accessory EH domain-containing proteins such as EPS15, EPS15L1 and ITSN1. Involved in endocytosis of cystic fibrosis transmembrane conductance regulator/CFTR. Involved in endocytosis of megalin/LRP2 lipoprotein receptor during embryonal development. Required for recycling of the TGF-beta receptor. Involved in CFTR trafficking to the late endosome. Involved in several receptor-mediated signaling pathways. Involved in TGF-beta receptor signaling and facilitates phosphorylation of the signal transducer SMAD2. Mediates TFG-beta-stimulated JNK activation. May inhibit the canoniocal Wnt/beta-catenin signaling pathway by stabilizing the beta-catenin destruction complex through a competing association with axin preventing its dephosphorylation through protein phosphatase 1 (PP1). Sequesters LRP6 towards clathrin-mediated endocytosis, leading to inhibition of Wnt/beta-catenin signaling. May activate non-canonical Wnt signaling. In cell surface growth factor/Ras signaling pathways proposed to inhibit ERK activation by interrupting the binding of GRB2 to SOS1 and to inhibit SRC by preventing its activating phosphorylation at 'Tyr-419'. Proposed to be involved in modulation of androgen receptor (AR) signaling mediated by SRC activation; seems to compete with AR for interaction with SRC. Plays a role in the CSF-1 signal transduction pathway. Plays a role in cellular differentiation. Involved in cell positioning and formation of visceral endoderm (VE) during embryogenesis and proposed to be required in the VE to respond to Nodal signaling coming from the epiblast. Required for the epithelial to mesenchymal transition, a process necessary for proper embryonic development. May be involved in myeloid cell differentiation and can induce macrophage adhesion and spreading. May act as a tumor suppressor. This is Disabled homolog 2 (DAB2) from Homo sapiens (Human).